A 374-amino-acid polypeptide reads, in one-letter code: Probable tRNA pseudouridine synthase D (374 aa).

Residue Asp81 is the Nucleophile of the active site. Residues Val141–Leu340 enclose the TRUD domain.

This sequence belongs to the pseudouridine synthase TruD family.

The enzyme catalyses uridine(13) in tRNA = pseudouridine(13) in tRNA. Could be responsible for synthesis of pseudouridine from uracil-13 in transfer RNAs. In Nanoarchaeum equitans (strain Kin4-M), this protein is Probable tRNA pseudouridine synthase D.